The chain runs to 198 residues: HTH-type transcriptional regulator BetI (198 aa).

The region spanning 8-68 (PLRRRELIDA…ATMRHLLREL (61 aa)) is the HTH tetR-type domain. Positions 31–50 (TVAQIAHEAGVSPALAHHYF) form a DNA-binding region, H-T-H motif.

It functions in the pathway amine and polyamine biosynthesis; betaine biosynthesis via choline pathway [regulation]. In terms of biological role, repressor involved in the biosynthesis of the osmoprotectant glycine betaine. It represses transcription of the choline transporter BetT and the genes of BetAB involved in the synthesis of glycine betaine. This is HTH-type transcriptional regulator BetI from Brucella suis biovar 1 (strain 1330).